Consider the following 207-residue polypeptide: Holliday junction resolvase RecU (207 aa).

Positions 1–30 are disordered; that stretch reads MPIRYPNGQPYSRSPKQGQAKKPLPADTYS. Positions 87, 89, 102, and 121 each coordinate Mg(2+).

The protein belongs to the RecU family. The cofactor is Mg(2+).

It localises to the cytoplasm. It carries out the reaction Endonucleolytic cleavage at a junction such as a reciprocal single-stranded crossover between two homologous DNA duplexes (Holliday junction).. Functionally, endonuclease that resolves Holliday junction intermediates in genetic recombination. Cleaves mobile four-strand junctions by introducing symmetrical nicks in paired strands. Promotes annealing of linear ssDNA with homologous dsDNA. Required for DNA repair, homologous recombination and chromosome segregation. The polypeptide is Holliday junction resolvase RecU (Shouchella clausii (strain KSM-K16) (Alkalihalobacillus clausii)).